Reading from the N-terminus, the 546-residue chain is CTP synthase (546 aa).

The segment at 1-266 is amidoligase domain; the sequence is MTTRYIFVTG…DELVVKRFSL (266 aa). Ser-14 lines the CTP pocket. Ser-14 is a UTP binding site. Residues 15–20 and Asp-72 contribute to the ATP site; that span reads SLGKGI. Residues Asp-72 and Glu-140 each coordinate Mg(2+). CTP-binding positions include 147–149, 187–192, and Lys-223; these read DIE and KTKPTQ. UTP-binding positions include 187-192 and Lys-223; that span reads KTKPTQ. 239-241 is an ATP binding site; sequence KDV. The Glutamine amidotransferase type-1 domain occupies 291 to 542; sequence VIGMVGKYIE…VAAASAHQKR (252 aa). Gly-352 provides a ligand contact to L-glutamine. Cys-379 serves as the catalytic Nucleophile; for glutamine hydrolysis. L-glutamine is bound by residues 380–383, Glu-403, and Arg-470; that span reads LGMQ. Active-site residues include His-515 and Glu-517.

It belongs to the CTP synthase family. In terms of assembly, homotetramer.

The enzyme catalyses UTP + L-glutamine + ATP + H2O = CTP + L-glutamate + ADP + phosphate + 2 H(+). The catalysed reaction is L-glutamine + H2O = L-glutamate + NH4(+). It carries out the reaction UTP + NH4(+) + ATP = CTP + ADP + phosphate + 2 H(+). It functions in the pathway pyrimidine metabolism; CTP biosynthesis via de novo pathway; CTP from UDP: step 2/2. Its activity is regulated as follows. Allosterically activated by GTP, when glutamine is the substrate; GTP has no effect on the reaction when ammonia is the substrate. The allosteric effector GTP functions by stabilizing the protein conformation that binds the tetrahedral intermediate(s) formed during glutamine hydrolysis. Inhibited by the product CTP, via allosteric rather than competitive inhibition. Functionally, catalyzes the ATP-dependent amination of UTP to CTP with either L-glutamine or ammonia as the source of nitrogen. Regulates intracellular CTP levels through interactions with the four ribonucleotide triphosphates. In Shewanella oneidensis (strain ATCC 700550 / JCM 31522 / CIP 106686 / LMG 19005 / NCIMB 14063 / MR-1), this protein is CTP synthase.